The following is a 200-amino-acid chain: MSRWAGIVLAGGMSSRFGEPKALASWQGSTFIEHILKEMTSALQEVVVISHSDIKERVEQFVQVPVIEDIPHYKGNGPLAGIVSGMEYIEADWYAIMPCDAPNVSHEWFTILLEQTSNEYDAVVPIINGRKQPLFAAYHNRVKEKIYALLQEEKRSMGQLLSQCNVKYVAGEDVQANTDWFINVNTKEEYVQAQKDLSNE.

Residues 9 to 11 (LAG), Lys-21, Asp-69, and Asp-100 contribute to the GTP site. Asp-100 is a Mg(2+) binding site.

It belongs to the MobA family. Mg(2+) serves as cofactor.

The protein resides in the cytoplasm. The enzyme catalyses Mo-molybdopterin + GTP + H(+) = Mo-molybdopterin guanine dinucleotide + diphosphate. In terms of biological role, transfers a GMP moiety from GTP to Mo-molybdopterin (Mo-MPT) cofactor (Moco or molybdenum cofactor) to form Mo-molybdopterin guanine dinucleotide (Mo-MGD) cofactor. The polypeptide is Probable molybdenum cofactor guanylyltransferase (Bacillus cereus (strain G9842)).